A 342-amino-acid polypeptide reads, in one-letter code: Protein-glutamate methylesterase/protein-glutamine glutaminase 1 (342 aa).

One can recognise a Response regulatory domain in the interval 3 to 121 (RVLVIDDSLF…NIREIGGELK (119 aa)). A 4-aspartylphosphate modification is found at Asp-54. Residues 141–340 (DSNARNVVLI…EKIVETIRAM (200 aa)) enclose the CheB-type methylesterase domain. Active-site residues include Ser-153, His-180, and Asp-282.

Belongs to the CheB family. In terms of processing, phosphorylated by CheA. Phosphorylation of the N-terminal regulatory domain activates the methylesterase activity.

The protein localises to the cytoplasm. It carries out the reaction [protein]-L-glutamate 5-O-methyl ester + H2O = L-glutamyl-[protein] + methanol + H(+). The catalysed reaction is L-glutaminyl-[protein] + H2O = L-glutamyl-[protein] + NH4(+). In terms of biological role, involved in chemotaxis. Part of a chemotaxis signal transduction system that modulates chemotaxis in response to various stimuli. Catalyzes the demethylation of specific methylglutamate residues introduced into the chemoreceptors (methyl-accepting chemotaxis proteins or MCP) by CheR. Also mediates the irreversible deamidation of specific glutamine residues to glutamic acid. The protein is Protein-glutamate methylesterase/protein-glutamine glutaminase 1 of Methanospirillum hungatei JF-1 (strain ATCC 27890 / DSM 864 / NBRC 100397 / JF-1).